Here is an 832-residue protein sequence, read N- to C-terminus: Elongation factor 2 (832 aa).

A tr-type G domain is found at 17 to 336; it reads HNIRNMSVIA…MIVTHLPSPA (320 aa). A GTP-binding site is contributed by 26–33; sequence AHVDHGKS. A phosphothreonine mark is found at threonine 57 and threonine 59. Residues 152–155 and 207–209 each bind GTP; these read NKVD and SGL. Residues 580–608 form a disordered region; it reads AEPLPDGLTDDIEEGKVSPRDDPKERSNL. Over residues 593 to 608 the composition is skewed to basic and acidic residues; the sequence is EGKVSPRDDPKERSNL. The residue at position 689 (histidine 689) is a Diphthamide.

Belongs to the TRAFAC class translation factor GTPase superfamily. Classic translation factor GTPase family. EF-G/EF-2 subfamily.

It is found in the cytoplasm. The catalysed reaction is GTP + H2O = GDP + phosphate + H(+). Functionally, catalyzes the GTP-dependent ribosomal translocation step during translation elongation. During this step, the ribosome changes from the pre-translocational (PRE) to the post-translocational (POST) state as the newly formed A-site-bound peptidyl-tRNA and P-site-bound deacylated tRNA move to the P and E sites, respectively. Catalyzes the coordinated movement of the two tRNA molecules, the mRNA and conformational changes in the ribosome. The chain is Elongation factor 2 from Cryptosporidium parvum.